The sequence spans 333 residues: Anthranilate phosphoribosyltransferase (333 aa).

5-phospho-alpha-D-ribose 1-diphosphate-binding positions include Gly81, 84-85, Thr89, 91-94, 109-117, and Ala121; these read GD, NIST, and KHGNRSVSS. Gly81 contributes to the anthranilate binding site. Ser93 serves as a coordination point for Mg(2+). Residue Asn112 participates in anthranilate binding. Position 167 (Arg167) interacts with anthranilate. Mg(2+) contacts are provided by Asp225 and Glu226.

It belongs to the anthranilate phosphoribosyltransferase family. Homodimer. Mg(2+) serves as cofactor.

The enzyme catalyses N-(5-phospho-beta-D-ribosyl)anthranilate + diphosphate = 5-phospho-alpha-D-ribose 1-diphosphate + anthranilate. It participates in amino-acid biosynthesis; L-tryptophan biosynthesis; L-tryptophan from chorismate: step 2/5. In terms of biological role, catalyzes the transfer of the phosphoribosyl group of 5-phosphorylribose-1-pyrophosphate (PRPP) to anthranilate to yield N-(5'-phosphoribosyl)-anthranilate (PRA). In Actinobacillus succinogenes (strain ATCC 55618 / DSM 22257 / CCUG 43843 / 130Z), this protein is Anthranilate phosphoribosyltransferase.